The chain runs to 453 residues: o-phthalyl amidase (453 aa).

Monomer. Post-translationally, the N-terminus is blocked.

It catalyses the reaction a phtalamide + H2O = phthalate + a primary amine. Inhibited by iodoacetate, p-hydroxymercuric benzoate and copper ions. Catalyzes the removal of the phthalyl group from phthalyl amides generating phthalate and an amine. The enzyme has a broad substrate specificity and hydrolyzes phthalylated amino acids, peptides, beta-lactams, aromatic and aliphatic amines; substitutions allowed on the phthalyl group include 6-F, 6-NH(2), 3-OH, and a nitrogen in the aromatic ring ortho to the carboxy group attached to the amine. This chain is o-phthalyl amidase, found in Xanthobacter agilis.